A 213-amino-acid chain; its full sequence is Adenylate kinase (213 aa).

Gly-10–Thr-15 provides a ligand contact to ATP. Positions Ser-30–Val-59 are NMP. AMP is bound by residues Thr-31, Arg-36, Asn-57 to Val-59, Gly-85 to Arg-88, and Gln-92. The LID stretch occupies residues Gly-122–Asp-159. Residues Arg-123 and Ile-132 to Tyr-133 contribute to the ATP site. Residues Arg-156 and Arg-167 each coordinate AMP. Cys-199 is an ATP binding site.

It belongs to the adenylate kinase family. In terms of assembly, monomer.

The protein resides in the cytoplasm. It carries out the reaction AMP + ATP = 2 ADP. It participates in purine metabolism; AMP biosynthesis via salvage pathway; AMP from ADP: step 1/1. Functionally, catalyzes the reversible transfer of the terminal phosphate group between ATP and AMP. Plays an important role in cellular energy homeostasis and in adenine nucleotide metabolism. The polypeptide is Adenylate kinase (Baumannia cicadellinicola subsp. Homalodisca coagulata).